The primary structure comprises 425 residues: Imidazolonepropionase (425 aa).

Fe(3+) contacts are provided by His-82 and His-84. Zn(2+)-binding residues include His-82 and His-84. 3 residues coordinate 4-imidazolone-5-propanoate: Arg-91, Tyr-154, and His-187. Tyr-154 lines the N-formimidoyl-L-glutamate pocket. His-253 contributes to the Fe(3+) binding site. His-253 contacts Zn(2+). Glu-256 is a binding site for 4-imidazolone-5-propanoate. Asp-328 lines the Fe(3+) pocket. A Zn(2+)-binding site is contributed by Asp-328. 2 residues coordinate N-formimidoyl-L-glutamate: Asn-330 and Gly-332. Ser-333 lines the 4-imidazolone-5-propanoate pocket.

Belongs to the metallo-dependent hydrolases superfamily. HutI family. It depends on Zn(2+) as a cofactor. Requires Fe(3+) as cofactor.

The protein resides in the cytoplasm. The catalysed reaction is 4-imidazolone-5-propanoate + H2O = N-formimidoyl-L-glutamate. The protein operates within amino-acid degradation; L-histidine degradation into L-glutamate; N-formimidoyl-L-glutamate from L-histidine: step 3/3. Catalyzes the hydrolytic cleavage of the carbon-nitrogen bond in imidazolone-5-propanoate to yield N-formimidoyl-L-glutamate. It is the third step in the universal histidine degradation pathway. The protein is Imidazolonepropionase of Symbiobacterium thermophilum (strain DSM 24528 / JCM 14929 / IAM 14863 / T).